The sequence spans 356 residues: tRNA-specific 2-thiouridylase MnmA (356 aa).

ATP contacts are provided by residues 6 to 13 (AMSGGVDS) and leucine 32. Residue cysteine 101 is the Nucleophile of the active site. An intrachain disulfide couples cysteine 101 to cysteine 193. Residue glycine 125 participates in ATP binding. The interaction with tRNA stretch occupies residues 143-145 (KDQ). The Cysteine persulfide intermediate role is filled by cysteine 193.

The protein belongs to the MnmA/TRMU family.

The protein resides in the cytoplasm. It catalyses the reaction S-sulfanyl-L-cysteinyl-[protein] + uridine(34) in tRNA + AH2 + ATP = 2-thiouridine(34) in tRNA + L-cysteinyl-[protein] + A + AMP + diphosphate + H(+). In terms of biological role, catalyzes the 2-thiolation of uridine at the wobble position (U34) of tRNA, leading to the formation of s(2)U34. This chain is tRNA-specific 2-thiouridylase MnmA, found in Mycobacteroides abscessus (strain ATCC 19977 / DSM 44196 / CCUG 20993 / CIP 104536 / JCM 13569 / NCTC 13031 / TMC 1543 / L948) (Mycobacterium abscessus).